The chain runs to 285 residues: Probable endonuclease 4 (285 aa).

9 residues coordinate Zn(2+): His-69, His-109, Glu-145, Asp-179, His-182, His-216, Asp-229, His-231, and Glu-261.

The protein belongs to the AP endonuclease 2 family. It depends on Zn(2+) as a cofactor.

It carries out the reaction Endonucleolytic cleavage to 5'-phosphooligonucleotide end-products.. Functionally, endonuclease IV plays a role in DNA repair. It cleaves phosphodiester bonds at apurinic or apyrimidinic (AP) sites, generating a 3'-hydroxyl group and a 5'-terminal sugar phosphate. The sequence is that of Probable endonuclease 4 from Escherichia coli O81 (strain ED1a).